Consider the following 237-residue polypeptide: Ribonuclease 3 (237 aa).

Residues 7–135 (IKEVEAKLKF…ILGAVYLDGG (129 aa)) form the RNase III domain. Glu48 serves as a coordination point for Mg(2+). Residue Asp52 is part of the active site. 2 residues coordinate Mg(2+): Asn121 and Glu124. The active site involves Glu124. The 70-residue stretch at 160–229 (NPKNRLQQLT…AQEALDANDY (70 aa)) folds into the DRBM domain.

This sequence belongs to the ribonuclease III family. Homodimer. It depends on Mg(2+) as a cofactor.

The protein resides in the cytoplasm. It carries out the reaction Endonucleolytic cleavage to 5'-phosphomonoester.. Functionally, digests double-stranded RNA. Involved in the processing of primary rRNA transcript to yield the immediate precursors to the large and small rRNAs (23S and 16S). Processes some mRNAs, and tRNAs when they are encoded in the rRNA operon. Processes pre-crRNA and tracrRNA of type II CRISPR loci if present in the organism. The polypeptide is Ribonuclease 3 (Chlamydia felis (strain Fe/C-56) (Chlamydophila felis)).